The following is a 335-amino-acid chain: Biotin synthase (335 aa).

Residues 46–274 (YKVQLASLFS…KSKIRLSAGR (229 aa)) form the Radical SAM core domain. Residues Cys61, Cys65, and Cys68 each coordinate [4Fe-4S] cluster. The [2Fe-2S] cluster site is built by Cys105, Cys137, Cys197, and Arg269.

The protein belongs to the radical SAM superfamily. Biotin synthase family. As to quaternary structure, homodimer. The cofactor is [4Fe-4S] cluster. Requires [2Fe-2S] cluster as cofactor.

It catalyses the reaction (4R,5S)-dethiobiotin + (sulfur carrier)-SH + 2 reduced [2Fe-2S]-[ferredoxin] + 2 S-adenosyl-L-methionine = (sulfur carrier)-H + biotin + 2 5'-deoxyadenosine + 2 L-methionine + 2 oxidized [2Fe-2S]-[ferredoxin]. It functions in the pathway cofactor biosynthesis; biotin biosynthesis; biotin from 7,8-diaminononanoate: step 2/2. Its function is as follows. Catalyzes the conversion of dethiobiotin (DTB) to biotin by the insertion of a sulfur atom into dethiobiotin via a radical-based mechanism. This Prochlorococcus marinus subsp. pastoris (strain CCMP1986 / NIES-2087 / MED4) protein is Biotin synthase.